Reading from the N-terminus, the 327-residue chain is 4-hydroxythreonine-4-phosphate dehydrogenase (327 aa).

2 residues coordinate substrate: His134 and Thr135. 3 residues coordinate a divalent metal cation: His164, His209, and His264. Substrate-binding residues include Lys272, Asn281, and Arg290.

It belongs to the PdxA family. In terms of assembly, homodimer. Requires Zn(2+) as cofactor. Mg(2+) is required as a cofactor. The cofactor is Co(2+).

The protein localises to the cytoplasm. The catalysed reaction is 4-(phosphooxy)-L-threonine + NAD(+) = 3-amino-2-oxopropyl phosphate + CO2 + NADH. The protein operates within cofactor biosynthesis; pyridoxine 5'-phosphate biosynthesis; pyridoxine 5'-phosphate from D-erythrose 4-phosphate: step 4/5. Catalyzes the NAD(P)-dependent oxidation of 4-(phosphooxy)-L-threonine (HTP) into 2-amino-3-oxo-4-(phosphooxy)butyric acid which spontaneously decarboxylates to form 3-amino-2-oxopropyl phosphate (AHAP). The chain is 4-hydroxythreonine-4-phosphate dehydrogenase from Shewanella frigidimarina (strain NCIMB 400).